The sequence spans 602 residues: uncharacterized protein (602 aa).

In terms of domain architecture, Helicase ATP-binding spans 51 to 210 (QYLGTQPRDF…PFVSYQPDAD (160 aa)). The segment covering 430 to 439 (PHRESAHDPL) has biased composition (basic and acidic residues). Disordered stretches follow at residues 430–452 (PHRE…TERG) and 518–538 (RAQL…ASVH). A compositionally biased stretch (polar residues) spans 523 to 534 (KGATQPATSGAS).

To M.leprae ML1624.

This is an uncharacterized protein from Mycobacterium tuberculosis (strain CDC 1551 / Oshkosh).